A 104-amino-acid polypeptide reads, in one-letter code: UPF0235 protein Paes_1868 (104 aa).

Belongs to the UPF0235 family.

In Prosthecochloris aestuarii (strain DSM 271 / SK 413), this protein is UPF0235 protein Paes_1868.